Here is a 390-residue protein sequence, read N- to C-terminus: 4-hydroxy-3-methylbut-2-en-1-yl diphosphate synthase (flavodoxin) (390 aa).

[4Fe-4S] cluster contacts are provided by Cys281, Cys284, Cys316, and Glu323.

The protein belongs to the IspG family. It depends on [4Fe-4S] cluster as a cofactor.

The catalysed reaction is (2E)-4-hydroxy-3-methylbut-2-enyl diphosphate + oxidized [flavodoxin] + H2O + 2 H(+) = 2-C-methyl-D-erythritol 2,4-cyclic diphosphate + reduced [flavodoxin]. It functions in the pathway isoprenoid biosynthesis; isopentenyl diphosphate biosynthesis via DXP pathway; isopentenyl diphosphate from 1-deoxy-D-xylulose 5-phosphate: step 5/6. Converts 2C-methyl-D-erythritol 2,4-cyclodiphosphate (ME-2,4cPP) into 1-hydroxy-2-methyl-2-(E)-butenyl 4-diphosphate. The polypeptide is 4-hydroxy-3-methylbut-2-en-1-yl diphosphate synthase (flavodoxin) (Salinispora tropica (strain ATCC BAA-916 / DSM 44818 / JCM 13857 / NBRC 105044 / CNB-440)).